A 34-amino-acid chain; its full sequence is uncharacterized protein (34 aa).

This is an uncharacterized protein from Rhizobium radiobacter (Agrobacterium tumefaciens).